The primary structure comprises 344 residues: Chalcone synthase A (344 aa).

Residue Cys167 is part of the active site.

Belongs to the thiolase-like superfamily. Chalcone/stilbene synthases family.

The enzyme catalyses (E)-4-coumaroyl-CoA + 3 malonyl-CoA + 3 H(+) = 2',4,4',6'-tetrahydroxychalcone + 3 CO2 + 4 CoA. It participates in secondary metabolite biosynthesis; flavonoid biosynthesis. In terms of biological role, the primary product of this enzyme is 4,2',4',6'-tetrahydroxychalcone (also termed naringenin-chalcone or chalcone) which can under specific conditions spontaneously isomerize into naringenin. In Ipomoea nil (Japanese morning glory), this protein is Chalcone synthase A (CHSA).